Consider the following 1057-residue polypeptide: Carbamoyl phosphate synthase large chain (1057 aa).

The tract at residues 1-401 is carboxyphosphate synthetic domain; that stretch reads MPKRNDIKTI…SLLKAIRSLE (401 aa). Residues Arg-129, Arg-169, Gly-175, Gly-176, Lys-208, Ile-210, Glu-215, Gly-241, Ile-242, His-243, Gln-284, and Glu-298 each coordinate ATP. Residues 133-327 form the ATP-grasp 1 domain; the sequence is RTLMNDLNVP…IAKLAAKIAV (195 aa). Gln-284, Glu-298, and Asn-300 together coordinate Mg(2+). 3 residues coordinate Mn(2+): Gln-284, Glu-298, and Asn-300. The segment at 402–546 is oligomerization domain; that stretch reads YGVHHLGLPN…YGTYETENES (145 aa). Positions 547–929 are carbamoyl phosphate synthetic domain; sequence IVTDKEKILV…ALFKGLTGSG (383 aa). The ATP-grasp 2 domain occupies 671 to 861; that stretch reads EALLRKINVP…MAQLAMRAII (191 aa). Residues Arg-707, Arg-746, Leu-748, Glu-752, Gly-777, Val-778, His-779, Ser-780, Gln-820, and Glu-832 each contribute to the ATP site. Mg(2+) is bound by residues Gln-820, Glu-832, and Asn-834. Residues Gln-820, Glu-832, and Asn-834 each coordinate Mn(2+). One can recognise an MGS-like domain in the interval 930-1057; that stretch reads VEVKDHGTVL…ESMTFTMRQM (128 aa). Residues 930–1057 are allosteric domain; it reads VEVKDHGTVL…ESMTFTMRQM (128 aa).

The protein belongs to the CarB family. In terms of assembly, composed of two chains; the small (or glutamine) chain promotes the hydrolysis of glutamine to ammonia, which is used by the large (or ammonia) chain to synthesize carbamoyl phosphate. Tetramer of heterodimers (alpha,beta)4. Mg(2+) is required as a cofactor. The cofactor is Mn(2+).

The catalysed reaction is hydrogencarbonate + L-glutamine + 2 ATP + H2O = carbamoyl phosphate + L-glutamate + 2 ADP + phosphate + 2 H(+). It carries out the reaction hydrogencarbonate + NH4(+) + 2 ATP = carbamoyl phosphate + 2 ADP + phosphate + 2 H(+). It participates in amino-acid biosynthesis; L-arginine biosynthesis; carbamoyl phosphate from bicarbonate: step 1/1. Its pathway is pyrimidine metabolism; UMP biosynthesis via de novo pathway; (S)-dihydroorotate from bicarbonate: step 1/3. Functionally, large subunit of the glutamine-dependent carbamoyl phosphate synthetase (CPSase). CPSase catalyzes the formation of carbamoyl phosphate from the ammonia moiety of glutamine, carbonate, and phosphate donated by ATP, constituting the first step of 2 biosynthetic pathways, one leading to arginine and/or urea and the other to pyrimidine nucleotides. The large subunit (synthetase) binds the substrates ammonia (free or transferred from glutamine from the small subunit), hydrogencarbonate and ATP and carries out an ATP-coupled ligase reaction, activating hydrogencarbonate by forming carboxy phosphate which reacts with ammonia to form carbamoyl phosphate. This Staphylococcus aureus (strain MW2) protein is Carbamoyl phosphate synthase large chain.